Here is a 451-residue protein sequence, read N- to C-terminus: REST corepressor 3 (451 aa).

The tract at residues 1-55 (MPGMMEKGPELLGKSRSANGGAKSPAGGGGSSANGGLHFSEPESGCSSDDEHGDV) is disordered. One can recognise an ELM2 domain in the interval 55–139 (VGMRVGAEYQ…KSLADLPNFT (85 aa)). Lys76 is covalently cross-linked (Glycyl lysine isopeptide (Lys-Gly) (interchain with G-Cter in SUMO2)). The SANT domain maps to 140–191 (PFPDEWTVEDKVLFEQAFSFHGKSFHRIQQMLPDKTIASLVKYYYSWKKTRS). The tract at residues 204-275 (ANRHNQGDSD…SQRSKCRPPK (72 aa)) is disordered. Phosphoserine is present on residues Ser212 and Ser227. Residues 218 to 240 (EAHPMDGNDSDYDPKKEAKREGN) show a composition bias toward basic and acidic residues. Lys249 is covalently cross-linked (Glycyl lysine isopeptide (Lys-Gly) (interchain with G-Cter in SUMO2)). Over residues 261-273 (QHRHHSQRSKCRP) the composition is skewed to basic residues. Residues 293-329 (AANTILRQLDMELISLKRQVQNAKQVNSALKQKMEGG) adopt a coiled-coil conformation. A disordered region spans residues 333-451 (FKPPEAQTPQ…IQTDSQPSLH (119 aa)). Residues 349–361 (PSPPAPSSTPTPT) show a composition bias toward pro residues. The segment covering 375–384 (RPTLPAAPAL) has biased composition (low complexity). An asymmetric dimethylarginine mark is found at Arg401 and Arg413. Residues 431 to 451 (VGGQQPPSLIGIQTDSQPSLH) show a composition bias toward polar residues.

This sequence belongs to the CoREST family.

It localises to the nucleus. Functionally, may act as a component of a corepressor complex that represses transcription. This is REST corepressor 3 (Rcor3) from Mus musculus (Mouse).